The primary structure comprises 180 residues: GTP cyclohydrolase 1 (180 aa).

The Zn(2+) site is built by cysteine 71, histidine 74, and cysteine 142.

It belongs to the GTP cyclohydrolase I family. In terms of assembly, toroid-shaped homodecamer, composed of two pentamers of five dimers.

It catalyses the reaction GTP + H2O = 7,8-dihydroneopterin 3'-triphosphate + formate + H(+). It functions in the pathway cofactor biosynthesis; 7,8-dihydroneopterin triphosphate biosynthesis; 7,8-dihydroneopterin triphosphate from GTP: step 1/1. The sequence is that of GTP cyclohydrolase 1 from Helicobacter acinonychis (strain Sheeba).